The primary structure comprises 114 residues: rRNA-processing protein cgrA (114 aa).

The segment at Met1–Arg96 is disordered. The stretch at Ala40–Arg101 forms a coiled coil. Residues Lys41–Lys93 are compositionally biased toward basic and acidic residues.

Belongs to the CGR1 family.

Its subcellular location is the nucleus. It localises to the nucleolus. Its function is as follows. Involved in nucleolar integrity and required for processing of the pre-rRNA for the 60S ribosome subunit. The sequence is that of rRNA-processing protein cgrA (cgrA) from Aspergillus terreus (strain NIH 2624 / FGSC A1156).